We begin with the raw amino-acid sequence, 462 residues long: Glycogen synthase 1 (462 aa).

Arginine 6 contacts ADP-alpha-D-glucose.

This sequence belongs to the glycosyltransferase 1 family. Bacterial/plant glycogen synthase subfamily.

It catalyses the reaction [(1-&gt;4)-alpha-D-glucosyl](n) + ADP-alpha-D-glucose = [(1-&gt;4)-alpha-D-glucosyl](n+1) + ADP + H(+). It participates in glycan biosynthesis; glycogen biosynthesis. Functionally, synthesizes alpha-1,4-glucan chains using ADP-glucose. The chain is Glycogen synthase 1 from Bradyrhizobium diazoefficiens (strain JCM 10833 / BCRC 13528 / IAM 13628 / NBRC 14792 / USDA 110).